A 342-amino-acid chain; its full sequence is Holliday junction branch migration complex subunit RuvB (342 aa).

The tract at residues 1-179 (MTNILSPEKI…FGIPMRLNFY (179 aa)) is large ATPase domain (RuvB-L). ATP is bound by residues I18, R19, G60, K63, T64, T65, 126–128 (EDF), R169, Y179, and R216. Residue T64 coordinates Mg(2+). Residues 180-250 (NTEELKKVLN…ISDFGLNRLE (71 aa)) form a small ATPAse domain (RuvB-S) region. Residues 253–342 (HIGLDSNDYR…HQFNIFNENE (90 aa)) form a head domain (RuvB-H) region. Residues R289, R308, and R313 each coordinate DNA.

Belongs to the RuvB family. Homohexamer. Forms an RuvA(8)-RuvB(12)-Holliday junction (HJ) complex. HJ DNA is sandwiched between 2 RuvA tetramers; dsDNA enters through RuvA and exits via RuvB. An RuvB hexamer assembles on each DNA strand where it exits the tetramer. Each RuvB hexamer is contacted by two RuvA subunits (via domain III) on 2 adjacent RuvB subunits; this complex drives branch migration. In the full resolvosome a probable DNA-RuvA(4)-RuvB(12)-RuvC(2) complex forms which resolves the HJ.

Its subcellular location is the cytoplasm. It carries out the reaction ATP + H2O = ADP + phosphate + H(+). The RuvA-RuvB-RuvC complex processes Holliday junction (HJ) DNA during genetic recombination and DNA repair, while the RuvA-RuvB complex plays an important role in the rescue of blocked DNA replication forks via replication fork reversal (RFR). RuvA specifically binds to HJ cruciform DNA, conferring on it an open structure. The RuvB hexamer acts as an ATP-dependent pump, pulling dsDNA into and through the RuvAB complex. RuvB forms 2 homohexamers on either side of HJ DNA bound by 1 or 2 RuvA tetramers; 4 subunits per hexamer contact DNA at a time. Coordinated motions by a converter formed by DNA-disengaged RuvB subunits stimulates ATP hydrolysis and nucleotide exchange. Immobilization of the converter enables RuvB to convert the ATP-contained energy into a lever motion, pulling 2 nucleotides of DNA out of the RuvA tetramer per ATP hydrolyzed, thus driving DNA branch migration. The RuvB motors rotate together with the DNA substrate, which together with the progressing nucleotide cycle form the mechanistic basis for DNA recombination by continuous HJ branch migration. Branch migration allows RuvC to scan DNA until it finds its consensus sequence, where it cleaves and resolves cruciform DNA. This chain is Holliday junction branch migration complex subunit RuvB, found in Rickettsia felis (strain ATCC VR-1525 / URRWXCal2) (Rickettsia azadi).